Reading from the N-terminus, the 306-residue chain is Non-specific ribonucleoside hydrolase RihC (306 aa).

H235 is a catalytic residue.

It belongs to the IUNH family. RihC subfamily.

In terms of biological role, hydrolyzes both purine and pyrimidine ribonucleosides with a broad-substrate specificity. The sequence is that of Non-specific ribonucleoside hydrolase RihC from Salmonella enteritidis PT4 (strain P125109).